Consider the following 93-residue polypeptide: Large ribosomal subunit protein uL23cz/uL23cy (93 aa).

Belongs to the universal ribosomal protein uL23 family. As to quaternary structure, part of the 50S ribosomal subunit.

The protein resides in the plastid. It localises to the chloroplast. Binds to 23S rRNA. The protein is Large ribosomal subunit protein uL23cz/uL23cy (rpl23-A) of Nymphaea alba (White water-lily).